We begin with the raw amino-acid sequence, 249 residues long: ATP synthase subunits region ORF 6 (249 aa).

The chain is ATP synthase subunits region ORF 6 from Fuscovulum blasticum (Rhodobacter blasticus).